The primary structure comprises 199 residues: dITP/XTP pyrophosphatase (199 aa).

7 to 12 is a substrate binding site; the sequence is TGNKGK. The Proton acceptor role is filled by aspartate 71. Aspartate 71 is a binding site for Mg(2+). Substrate contacts are provided by residues alanine 72, 154–157, lysine 177, and 182–183; these read FGYD and HR.

The protein belongs to the HAM1 NTPase family. In terms of assembly, homodimer. Requires Mg(2+) as cofactor.

The enzyme catalyses XTP + H2O = XMP + diphosphate + H(+). It catalyses the reaction dITP + H2O = dIMP + diphosphate + H(+). It carries out the reaction ITP + H2O = IMP + diphosphate + H(+). Its function is as follows. Pyrophosphatase that catalyzes the hydrolysis of nucleoside triphosphates to their monophosphate derivatives, with a high preference for the non-canonical purine nucleotides XTP (xanthosine triphosphate), dITP (deoxyinosine triphosphate) and ITP. Seems to function as a house-cleaning enzyme that removes non-canonical purine nucleotides from the nucleotide pool, thus preventing their incorporation into DNA/RNA and avoiding chromosomal lesions. The sequence is that of dITP/XTP pyrophosphatase from Bdellovibrio bacteriovorus (strain ATCC 15356 / DSM 50701 / NCIMB 9529 / HD100).